The chain runs to 291 residues: Protein CMSS1 (291 aa).

The interval 1-96 (MADDLGDEWW…KKTITDVLTS (96 aa)) is disordered. A compositionally biased stretch (acidic residues) spans 17 to 27 (DVPEVEEETEH). Basic and acidic residues predominate over residues 58 to 79 (VKKECFITQERSEEKPDNESNK).

It belongs to the CMS1 family.

This is Protein CMSS1 (cmss1) from Danio rerio (Zebrafish).